Consider the following 151-residue polypeptide: 1,4-dihydroxy-2-naphthoyl-CoA hydrolase (151 aa).

The active site involves Asp-23.

Belongs to the 4-hydroxybenzoyl-CoA thioesterase family. DHNA-CoA hydrolase subfamily.

The enzyme catalyses 1,4-dihydroxy-2-naphthoyl-CoA + H2O = 1,4-dihydroxy-2-naphthoate + CoA + H(+). It participates in cofactor biosynthesis; phylloquinone biosynthesis. The protein operates within quinol/quinone metabolism; 1,4-dihydroxy-2-naphthoate biosynthesis; 1,4-dihydroxy-2-naphthoate from chorismate: step 7/7. In terms of biological role, catalyzes the hydrolysis of 1,4-dihydroxy-2-naphthoyl-CoA (DHNA-CoA) to 1,4-dihydroxy-2-naphthoate (DHNA), a reaction involved in phylloquinone (vitamin K1) biosynthesis. The chain is 1,4-dihydroxy-2-naphthoyl-CoA hydrolase from Prochlorococcus marinus (strain MIT 9211).